Here is a 903-residue protein sequence, read N- to C-terminus: Protein U7 (903 aa).

Residues lysine 665 to tyrosine 685 traverse the membrane as a helical segment.

The protein belongs to the herpesviridae US22 family.

The protein localises to the host membrane. The polypeptide is Protein U7 (U7) (Human herpesvirus 6B (strain Z29) (HHV-6 variant B)).